A 401-amino-acid polypeptide reads, in one-letter code: Arylacetamide deacetylase-like 2 (401 aa).

The signal sequence occupies residues 1-18 (MGLKALCLGLLCVLFVSH). The Involved in the stabilization of the negatively charged intermediate by the formation of the oxyanion hole motif lies at 111–113 (HGG). A disulfide bond links cysteine 116 and cysteine 338. Active-site residues include serine 189, aspartate 341, and histidine 371.

This sequence belongs to the 'GDXG' lipolytic enzyme family.

The protein localises to the secreted. This is Arylacetamide deacetylase-like 2 (AADACL2) from Homo sapiens (Human).